A 530-amino-acid chain; its full sequence is Tyrosinase (530 aa).

A signal peptide spans 1 to 17 (MLLAALYCLLWSFRTSA). At 19-473 (HFPRACASSK…IKPYLEQAQR (455 aa)) the chain is on the lumenal, melanosome side. N-linked (GlcNAc...) asparagine glycosylation is present at Asn86. Cu cation is bound by residues His180, His202, and His211. Residues Asn230, Asn290, and Asn337 are each glycosylated (N-linked (GlcNAc...) asparagine). Cu cation-binding residues include His363 and His367. Asn371 is a glycosylation site (N-linked (GlcNAc...) asparagine). His390 serves as a coordination point for Cu cation. A helical membrane pass occupies residues 474 to 494 (IWPWLIGAAVVGSVLTAVLGG). Topologically, residues 495 to 530 (LTSLLCRRKRNQLPEEKQPLLMEKEDYHNLMYQSHL) are cytoplasmic.

This sequence belongs to the tyrosinase family. As to quaternary structure, forms an OPN3-dependent complex with DCT in response to blue light in melanocytes. Requires Cu(2+) as cofactor. Glycosylated.

The protein resides in the melanosome membrane. The protein localises to the melanosome. The catalysed reaction is 2 L-dopa + O2 = 2 L-dopaquinone + 2 H2O. The enzyme catalyses L-tyrosine + O2 = L-dopaquinone + H2O. It carries out the reaction 2 5,6-dihydroxyindole-2-carboxylate + O2 = 2 indole-5,6-quinone-2-carboxylate + 2 H2O. Functionally, this is a copper-containing oxidase that functions in the formation of pigments such as melanins and other polyphenolic compounds. Catalyzes the initial and rate limiting step in the cascade of reactions leading to melanin production from tyrosine. In addition to hydroxylating tyrosine to DOPA (3,4-dihydroxyphenylalanine), also catalyzes the oxidation of DOPA to DOPA-quinone, and possibly the oxidation of DHI (5,6-dihydroxyindole) to indole-5,6 quinone. This Bos taurus (Bovine) protein is Tyrosinase (TYR).